The chain runs to 707 residues: MSKNDKKNKQSGSSNMDQLKSEDILQAVVLGDSFDRKFAPITLEKPRTLLPLVNIPLLDYTLEFLAASGVQQIFVFCCAHASQIKEYIQSSRWHDLPGVQVICMTGSNCRTTGDALRGVYDAQVIQSDFILISGDVVSNMNLQKALQIHKDRRELDKNNIMTMVYKQASSTHRTRSKQDDTVIWCNRDTMQVVCYDNSPSKKKSSISVELFQKHPSIQMRYDLIDCHIDICSPEVLALFNDNFDFADIRKDFIHDILTSDLLDYKLSAYVLQGEYAARVKDLRTYHSVSKDIIHRWTFPMVPDNNFMCNSSYSLSRQMIYKEKNVKLLGDCLISDETVIGTQTEIGAGSIVSHSTIGRNCIIGKNVKINGSYIWDDVTIQDNAIIDHSIICNGSIIKSSSIIGRGSIIGFNVYIGQSKTLEPFSKITMAQYNEDEDDEELLEEYFKEINLNDDNNNNNNNNNENNKTNRWLMENELYNELVPRINDSIHDDIESDESGDEGDKSGGKIKNNKNNDDNPIEPDSVKFHREVGDTIRRGIIEKLPLENIQLEINGLKFAYDRDGLDCLTSILPVLLESSSSSSSTTDSVTPKELQQFIAGRISAFSPLLVKFSSEDSMVDLIFKIQDFCDENEKFKVVFQPILHQLYENDVISEEAIFEWAEEIEGDEEDDGFYLKKCKGFIDWLKSAEEESDDSDDSDDDDDDSDESD.

Disordered stretches follow at residues 489 to 526 and 686 to 707; these read HDDI…SVKF and AEEE…DESD. Positions 516 to 693 constitute a W2 domain; the sequence is DNPIEPDSVK…KSAEEESDDS (178 aa). Residues 688 to 707 show a composition bias toward acidic residues; sequence EESDDSDDSDDDDDDSDESD.

Belongs to the eIF-2B gamma/epsilon subunits family. In terms of assembly, component of the translation initiation factor 2B (eIF2B) complex which is a heterodecamer of two sets of five different subunits: alpha, beta, gamma, delta and epsilon. Subunits alpha, beta and delta comprise a regulatory subcomplex and subunits epsilon and gamma comprise a catalytic subcomplex. Within the complex, the hexameric regulatory complex resides at the center, with the two heterodimeric catalytic subcomplexes bound on opposite sides.

The protein resides in the cytoplasm. The protein localises to the cytosol. Its function is as follows. Acts as a component of the translation initiation factor 2B (eIF2B) complex, which catalyzes the exchange of GDP for GTP on eukaryotic initiation factor 2 (eIF2) gamma subunit. Its guanine nucleotide exchange factor activity is repressed when bound to eIF2 complex phosphorylated on the alpha subunit, thereby limiting the amount of methionyl-initiator methionine tRNA available to the ribosome and consequently global translation is repressed. This is Translation initiation factor eIF2B subunit epsilon (eif2b5) from Dictyostelium discoideum (Social amoeba).